A 360-amino-acid chain; its full sequence is Meiosis-inducing protein 1 (360 aa).

The interval 102 to 135 (SKETKTTKDCTMATGPERGKKSSESTRSSSLSSL) is disordered. Positions 126 to 135 (STRSSSLSSL) are enriched in low complexity.

As to quaternary structure, interacts with UME6.

The protein resides in the nucleus. Its function is as follows. Transcription factor required for sporulation and for early sporulation-specific genes expression. Positive regulator of SME1/IME2 expression. Directly activates expression of SLZ1 during meiosis. This is Meiosis-inducing protein 1 (IME1) from Saccharomyces cerevisiae (strain ATCC 204508 / S288c) (Baker's yeast).